Reading from the N-terminus, the 324-residue chain is Cathepsin L-like proteinase (324 aa).

A signal peptide spans 1–16 (MKLIIALAALIVVINA). 3 cysteine pairs are disulfide-bonded: Cys-131–Cys-174, Cys-165–Cys-206, and Cys-263–Cys-312. The active site involves Cys-134. Catalysis depends on residues His-270 and Asn-290.

This sequence belongs to the peptidase C1 family. Expressed in larval carcasses and gut, and adult gut.

This is Cathepsin L-like proteinase from Phaedon cochleariae (Mustard beetle).